The following is a 284-amino-acid chain: Phosphatidylglycerol--prolipoprotein diacylglyceryl transferase (284 aa).

A run of 7 helical transmembrane segments spans residues 14-34 (IAFS…ACAI), 62-82 (YFLW…ILIY), 106-126 (FVGI…IASY), 136-156 (LLIY…FGRI), 190-210 (PSQL…VMWA), 218-238 (GLLI…AEFY), and 252-272 (LSMG…ILLY). Residue Arg155 coordinates a 1,2-diacyl-sn-glycero-3-phospho-(1'-sn-glycerol).

This sequence belongs to the Lgt family.

The protein resides in the cell inner membrane. The enzyme catalyses L-cysteinyl-[prolipoprotein] + a 1,2-diacyl-sn-glycero-3-phospho-(1'-sn-glycerol) = an S-1,2-diacyl-sn-glyceryl-L-cysteinyl-[prolipoprotein] + sn-glycerol 1-phosphate + H(+). It participates in protein modification; lipoprotein biosynthesis (diacylglyceryl transfer). In terms of biological role, catalyzes the transfer of the diacylglyceryl group from phosphatidylglycerol to the sulfhydryl group of the N-terminal cysteine of a prolipoprotein, the first step in the formation of mature lipoproteins. The sequence is that of Phosphatidylglycerol--prolipoprotein diacylglyceryl transferase from Helicobacter pylori (strain ATCC 700392 / 26695) (Campylobacter pylori).